Reading from the N-terminus, the 979-residue chain is Glycine dehydrogenase (decarboxylating) (979 aa).

Lysine 726 bears the N6-(pyridoxal phosphate)lysine mark.

It belongs to the GcvP family. As to quaternary structure, the glycine cleavage system is composed of four proteins: P, T, L and H. Requires pyridoxal 5'-phosphate as cofactor.

It carries out the reaction N(6)-[(R)-lipoyl]-L-lysyl-[glycine-cleavage complex H protein] + glycine + H(+) = N(6)-[(R)-S(8)-aminomethyldihydrolipoyl]-L-lysyl-[glycine-cleavage complex H protein] + CO2. Its function is as follows. The glycine cleavage system catalyzes the degradation of glycine. The P protein binds the alpha-amino group of glycine through its pyridoxal phosphate cofactor; CO(2) is released and the remaining methylamine moiety is then transferred to the lipoamide cofactor of the H protein. The protein is Glycine dehydrogenase (decarboxylating) of Ralstonia pickettii (strain 12J).